Reading from the N-terminus, the 507-residue chain is Capsid vertex component 1 (507 aa).

Positions 219–257 (AAAETSVSKHHPALENPSNIRGSAGGEGGGGRAGTGGTV) are disordered. Over residues 241–257 (SAGGEGGGGRAGTGGTV) the composition is skewed to gly residues.

Belongs to the herpesviridae CVC1 protein family. Interacts (via C-terminus) with capsid vertex component 2/CVC2.

The protein localises to the virion. It localises to the host nucleus. Functionally, capsid vertex-specific component that plays a role during viral DNA encapsidation, assuring correct genome cleavage and presumably stabilizing capsids that contain full-length viral genomes. The chain is Capsid vertex component 1 from Epstein-Barr virus (strain B95-8) (HHV-4).